Reading from the N-terminus, the 371-residue chain is Ferrochelatase (371 aa).

Fe cation is bound by residues histidine 218 and glutamate 299.

It belongs to the ferrochelatase family.

Its subcellular location is the cytoplasm. The enzyme catalyses heme b + 2 H(+) = protoporphyrin IX + Fe(2+). Its pathway is porphyrin-containing compound metabolism; protoheme biosynthesis; protoheme from protoporphyrin-IX: step 1/1. Its function is as follows. Catalyzes the ferrous insertion into protoporphyrin IX. This Ralstonia pickettii (strain 12J) protein is Ferrochelatase.